Here is a 528-residue protein sequence, read N- to C-terminus: Folylpolyglutamate synthase (528 aa).

104–107 (GKGG) contacts ATP. Mg(2+) is bound by residues Ser-134, Glu-208, and His-236. ATP contacts are provided by Arg-351 and Asp-365.

Belongs to the folylpolyglutamate synthase family. The cofactor is a monovalent cation.

The protein resides in the mitochondrion inner membrane. The protein localises to the mitochondrion matrix. It localises to the cytoplasm. It catalyses the reaction (6S)-5,6,7,8-tetrahydrofolyl-(gamma-L-Glu)(n) + L-glutamate + ATP = (6S)-5,6,7,8-tetrahydrofolyl-(gamma-L-Glu)(n+1) + ADP + phosphate + H(+). Its pathway is cofactor biosynthesis; tetrahydrofolylpolyglutamate biosynthesis. In terms of biological role, catalyzes conversion of folates to polyglutamate derivatives allowing concentration of folate compounds in the cell and the intracellular retention of these cofactors, which are important substrates for most of the folate-dependent enzymes that are involved in one-carbon transfer reactions involved in purine, pyrimidine and amino acid synthesis. The chain is Folylpolyglutamate synthase (met-6) from Neurospora crassa (strain ATCC 24698 / 74-OR23-1A / CBS 708.71 / DSM 1257 / FGSC 987).